Consider the following 298-residue polypeptide: Glycine--tRNA ligase alpha subunit (298 aa).

This sequence belongs to the class-II aminoacyl-tRNA synthetase family. Tetramer of two alpha and two beta subunits.

The protein localises to the cytoplasm. It carries out the reaction tRNA(Gly) + glycine + ATP = glycyl-tRNA(Gly) + AMP + diphosphate. This Helicobacter hepaticus (strain ATCC 51449 / 3B1) protein is Glycine--tRNA ligase alpha subunit.